The following is a 222-amino-acid chain: Glutathione S-transferase A2 (222 aa).

Alanine 2 is modified (N-acetylalanine). Residues 3–83 form the GST N-terminal domain; that stretch reads EKPKLHYSNI…YIASKYNLYG (81 aa). Lysine 4 is subject to N6-succinyllysine. Glutathione contacts are provided by residues tyrosine 9, arginine 45, 54–55, and 67–68; these read QV and QT. Positions 85–207 constitute a GST C-terminal domain; it reads DIKEKALIDM…LQPGSPRKPP (123 aa). The interval 199–222 is disordered; it reads QPGSPRKPPMDEKSLEESRKIFRF. The segment covering 206-222 has biased composition (basic and acidic residues); sequence PPMDEKSLEESRKIFRF.

Belongs to the GST superfamily. Alpha family. In terms of assembly, homodimer or heterodimer of GSTA1 and GSTA2. Liver.

It localises to the cytoplasm. The catalysed reaction is RX + glutathione = an S-substituted glutathione + a halide anion + H(+). Catalyzes the conjugation of glutathione to a large variety of electrophilic compounds. This Homo sapiens (Human) protein is Glutathione S-transferase A2 (GSTA2).